The sequence spans 293 residues: Protease HtpX (293 aa).

2 helical membrane passes run 4 to 24 (IALF…VLSL) and 34 to 54 (GLMI…LLMS). Position 139 (His-139) interacts with Zn(2+). The active site involves Glu-140. His-143 contacts Zn(2+). Helical transmembrane passes span 158-178 (VVNT…AGFM) and 193-213 (LIYF…ASII). Glu-222 is a binding site for Zn(2+).

This sequence belongs to the peptidase M48B family. Zn(2+) is required as a cofactor.

The protein resides in the cell inner membrane. The protein is Protease HtpX of Escherichia coli (strain ATCC 8739 / DSM 1576 / NBRC 3972 / NCIMB 8545 / WDCM 00012 / Crooks).